Reading from the N-terminus, the 238-residue chain is Ribonuclease 3 (238 aa).

Residues 11 to 136 (RARLEAAIGY…LIAAIYLDGG (126 aa)) form the RNase III domain. E49 is a Mg(2+) binding site. The active site involves D53. Residues D122 and E125 each coordinate Mg(2+). The active site involves E125. The DRBM domain occupies 161-230 (DAKTELQEWA…AMKLLEREGV (70 aa)).

This sequence belongs to the ribonuclease III family. As to quaternary structure, homodimer. The cofactor is Mg(2+).

The protein localises to the cytoplasm. It catalyses the reaction Endonucleolytic cleavage to 5'-phosphomonoester.. Its function is as follows. Digests double-stranded RNA. Involved in the processing of primary rRNA transcript to yield the immediate precursors to the large and small rRNAs (23S and 16S). Processes some mRNAs, and tRNAs when they are encoded in the rRNA operon. Processes pre-crRNA and tracrRNA of type II CRISPR loci if present in the organism. The polypeptide is Ribonuclease 3 (Rhizobium meliloti (strain 1021) (Ensifer meliloti)).